A 551-amino-acid chain; its full sequence is MSEKKVFVFGSFTEHETRSFFEQKPTKDPQNSKDKCVGSIQFGSLNLAAENSSVNTNGELKKGEADGTVKSAGSQERLDASRPASSDKNNDSDAKLPRKNSLRVPEHVVQNGIIKEISESNKSLNNGVAVKTDPIGLDNLSMSDGESDPVYKASSSKFQALDNEDFSSDSSSGSIQRKKNLKVPTESVPPVKDFTPRGLINAGNLCFLNATLQALLSCSPFVQLLQKIQLQDIPKADSPTLAAFSEFISELDVPSSSSIRNNVTVVEAGRPFRPAMFEGVLRNFTPDVLNNMSGRPRQEDAQEFLSFIMDQMHDELLKLKEQSPKVTASKSSVISSANDDGDEWETVGPKNKSAVTRTQSFVPSELSEIFGGQLKSVVKAKGTKASATVQPYLLLHLDIHPDGVQGIEDALHLFSAQEDLEGYRASVTGKTGVVSASKSIKIQKLSKIMILHLMRFSYGSQGSTKLRKGVKFPLELNLNRSHLVSLSNESLRYELVATITHHGWDPSKGHYTTDARRKNGQWLRFDDASVTPIGTKLVLHDQAYVLFYKQV.

2 disordered regions span residues 51–104 and 163–188; these read NSSV…SLRV and NEDF…TESV. Residues 197–551 form the USP domain; that stretch reads RGLINAGNLC…QAYVLFYKQV (355 aa). Cys206 functions as the Nucleophile in the catalytic mechanism. Residues 329 to 338 are compositionally biased toward polar residues; the sequence is SKSSVISSAN. The disordered stretch occupies residues 329-349; the sequence is SKSSVISSANDDGDEWETVGP. His510 (proton acceptor) is an active-site residue.

This sequence belongs to the peptidase C19 family.

It carries out the reaction Thiol-dependent hydrolysis of ester, thioester, amide, peptide and isopeptide bonds formed by the C-terminal Gly of ubiquitin (a 76-residue protein attached to proteins as an intracellular targeting signal).. Recognizes and hydrolyzes the peptide bond at the C-terminal Gly of ubiquitin. Involved in the processing of poly-ubiquitin precursors as well as that of ubiquitinated proteins. In Arabidopsis thaliana (Mouse-ear cress), this protein is Ubiquitin carboxyl-terminal hydrolase 24 (UBP24).